A 284-amino-acid polypeptide reads, in one-letter code: Tropomyosin Pen a 1.0102 (284 aa).

The tract at residues 1-51 (MDAIKKKMQAMKLEKDNAMDRADTLEQQNKEANNRAEKSEEEVHNLQKRMQ) is disordered. A coiled-coil region spans residues 1–273 (MDAIKKKMQA…KEKYKSITDE (273 aa)). The span at 12 to 45 (KLEKDNAMDRADTLEQQNKEANNRAEKSEEEVHN) shows a compositional bias: basic and acidic residues. IgE-binding stretches follow at residues 43–57 (VHNL…ENDL), 85–105 (VAAL…SEER), 133–153 (RSLS…EARF), 187–202 (ESKI…VVGN), 247–284 (QKLQ…LSGY), 249–260 (LQKEVDRLEDEL), and 266–281 (KYKS…FSEL).

Belongs to the tropomyosin family. As to quaternary structure, homodimer.

Tropomyosin, in association with the troponin complex, plays a central role in the calcium dependent regulation of muscle contraction. The protein is Tropomyosin Pen a 1.0102 of Penaeus aztecus (Brown shrimp).